Reading from the N-terminus, the 418-residue chain is Gamma-glutamyl phosphate reductase (418 aa).

Positions 1–18 are enriched in basic and acidic residues; it reads MAIQDEMRQVAEGAREAS. The segment at 1 to 22 is disordered; that stretch reads MAIQDEMRQVAEGAREASRTLS.

Belongs to the gamma-glutamyl phosphate reductase family.

The protein resides in the cytoplasm. The enzyme catalyses L-glutamate 5-semialdehyde + phosphate + NADP(+) = L-glutamyl 5-phosphate + NADPH + H(+). The protein operates within amino-acid biosynthesis; L-proline biosynthesis; L-glutamate 5-semialdehyde from L-glutamate: step 2/2. In terms of biological role, catalyzes the NADPH-dependent reduction of L-glutamate 5-phosphate into L-glutamate 5-semialdehyde and phosphate. The product spontaneously undergoes cyclization to form 1-pyrroline-5-carboxylate. The protein is Gamma-glutamyl phosphate reductase of Syntrophus aciditrophicus (strain SB).